Consider the following 374-residue polypeptide: Chaperone protein DnaJ (374 aa).

Positions 5–70 (CYYEILNVSK…GKRSRYDQFG (66 aa)) constitute a J domain. The CR-type zinc finger occupies 130–207 (GVEKEINIPR…CYGSGKIKKQ (78 aa)). Residues Cys143, Cys146, Cys159, Cys162, Cys181, Cys184, Cys195, and Cys198 each coordinate Zn(2+). CXXCXGXG motif repeat units follow at residues 143-150 (CDSCDGTG), 159-166 (CHACHGQG), 181-188 (CPVCNGTG), and 195-202 (CDDCYGSG).

Belongs to the DnaJ family. In terms of assembly, homodimer. Zn(2+) serves as cofactor.

The protein resides in the cytoplasm. Its function is as follows. Participates actively in the response to hyperosmotic and heat shock by preventing the aggregation of stress-denatured proteins and by disaggregating proteins, also in an autonomous, DnaK-independent fashion. Unfolded proteins bind initially to DnaJ; upon interaction with the DnaJ-bound protein, DnaK hydrolyzes its bound ATP, resulting in the formation of a stable complex. GrpE releases ADP from DnaK; ATP binding to DnaK triggers the release of the substrate protein, thus completing the reaction cycle. Several rounds of ATP-dependent interactions between DnaJ, DnaK and GrpE are required for fully efficient folding. Also involved, together with DnaK and GrpE, in the DNA replication of plasmids through activation of initiation proteins. The chain is Chaperone protein DnaJ from Francisella philomiragia subsp. philomiragia (strain ATCC 25017 / CCUG 19701 / FSC 153 / O#319-036).